A 100-amino-acid chain; its full sequence is MAKKSLIYREKKRQKLEKKYHLIRRSSKKEISEIPSLSEKWKIHGKLQSPPRNSAPTRLHRRCFSTGRPRANYRDFGLSGHILREMVQACLLPGATRSSW.

This sequence belongs to the universal ribosomal protein uS14 family. Part of the 30S ribosomal subunit.

The protein resides in the plastid. It localises to the chloroplast. Its function is as follows. Binds 16S rRNA, required for the assembly of 30S particles. The chain is Small ribosomal subunit protein uS14c from Capsella bursa-pastoris (Shepherd's purse).